Here is a 313-residue protein sequence, read N- to C-terminus: MSKMMVFTGNANPDLARRVVRQLHIPLGDVSVGKFSDGEISTEINENVRGKDVFIIQPTCAPTNDNLMELVVMADAFRRSSASRITAVIPYFGYARQDRRPRSARVAISAKVVADMLTVVGIDRVLTVDLHADQIQGFFDIPVDNIYGSPVLVDDIEDQRFENLMIVSPDIGGVVRARAVAKSLGVDLGIIDKRREKANHSEVMHIIGDVEGRTCILVDDMVDTAGTLCHAAKALKEHGAAKVYAYCTHPVLSGRAIENIEKSVLDELVVTNTVPLSAAAQACDRIRQLDIAPVVAEAVRRISNEESISAMFR.

Residues 37–39 and 96–97 contribute to the ATP site; these read DGE and RQ. 2 residues coordinate Mg(2+): H131 and D170. The active site involves K193. D-ribose 5-phosphate is bound by residues R195, D219, and 223-227; that span reads DTAGT.

The protein belongs to the ribose-phosphate pyrophosphokinase family. Class I subfamily. Homohexamer. The cofactor is Mg(2+).

The protein localises to the cytoplasm. It catalyses the reaction D-ribose 5-phosphate + ATP = 5-phospho-alpha-D-ribose 1-diphosphate + AMP + H(+). The protein operates within metabolic intermediate biosynthesis; 5-phospho-alpha-D-ribose 1-diphosphate biosynthesis; 5-phospho-alpha-D-ribose 1-diphosphate from D-ribose 5-phosphate (route I): step 1/1. Its function is as follows. Involved in the biosynthesis of the central metabolite phospho-alpha-D-ribosyl-1-pyrophosphate (PRPP) via the transfer of pyrophosphoryl group from ATP to 1-hydroxyl of ribose-5-phosphate (Rib-5-P). The polypeptide is Ribose-phosphate pyrophosphokinase (Pseudomonas putida (strain ATCC 47054 / DSM 6125 / CFBP 8728 / NCIMB 11950 / KT2440)).